Consider the following 135-residue polypeptide: Fatty acid-binding protein homolog 6 (135 aa).

Residues Arg-110 and 130–132 (REY) each bind a fatty acid.

Belongs to the calycin superfamily. Fatty-acid binding protein (FABP) family.

The protein is Fatty acid-binding protein homolog 6 (lbp-6) of Caenorhabditis elegans.